Reading from the N-terminus, the 132-residue chain is Small integral membrane protein 33 (132 aa).

The tract at residues 1 to 28 is disordered; that stretch reads MHQAGHYSWPSPAVNSSSEQEPQRQLPE. An N-linked (GlcNAc...) asparagine glycan is attached at N15. A helical membrane pass occupies residues 43–63; it reads PVVTVIVAVFVLLAVCIIVAV. Residues 99-132 form a disordered region; that stretch reads PQDSPEEAPPGPLVPGSCPAPDGPRPSIDEVTCL.

The protein resides in the membrane. The polypeptide is Small integral membrane protein 33 (Homo sapiens (Human)).